The primary structure comprises 484 residues: Glutamyl-tRNA(Gln) amidotransferase subunit A (484 aa).

Active-site charge relay system residues include K77 and S152. Residue S176 is the Acyl-ester intermediate of the active site.

It belongs to the amidase family. GatA subfamily. As to quaternary structure, heterotrimer of A, B and C subunits.

It carries out the reaction L-glutamyl-tRNA(Gln) + L-glutamine + ATP + H2O = L-glutaminyl-tRNA(Gln) + L-glutamate + ADP + phosphate + H(+). In terms of biological role, allows the formation of correctly charged Gln-tRNA(Gln) through the transamidation of misacylated Glu-tRNA(Gln) in organisms which lack glutaminyl-tRNA synthetase. The reaction takes place in the presence of glutamine and ATP through an activated gamma-phospho-Glu-tRNA(Gln). The polypeptide is Glutamyl-tRNA(Gln) amidotransferase subunit A (Pseudomonas aeruginosa (strain LESB58)).